A 541-amino-acid polypeptide reads, in one-letter code: Zinc finger protein 513 (541 aa).

The interval 1-118 is disordered; that stretch reads MPRRKQSHPQ…GEARGERPGP (118 aa). Residues 44-55 show a composition bias toward acidic residues; that stretch reads LEFEEEEEEDEG. Residues serine 85 and serine 96 each carry the phosphoserine modification. A compositionally biased stretch (basic and acidic residues) spans 103–115; that stretch reads EPARGPGEARGER. C2H2-type zinc fingers lie at residues 150–172, 178–200, 206–228, 360–382, 388–410, 416–438, 444–466, and 472–494; these read YSCR…MQTH, FRCG…TRTH, YRCP…QRTH, FACS…MKTH, FRCA…QRVH, YKCP…GRIH, FRCS…MLRH, and FRCA…QKVH. The tract at residues 492–541 is disordered; the sequence is KVHGHGGAGGPGLSAPEGWAPPHSPPSVLSTRGPAALGATGSRALHSDSP.

This sequence belongs to the krueppel C2H2-type zinc-finger protein family. In terms of assembly, binds DNA. Can associate with the proximal promoter regions of PAX6 and SP4, and their known targets including ARR3, RHO, OPN1MW2 and OPN1SW. Widely expressed. In the eye, expression is greatest in the retina and least in the lens and cornea.

It is found in the nucleus. In terms of biological role, transcriptional regulator that plays a role in retinal development and maintenance. The polypeptide is Zinc finger protein 513 (Znf513) (Mus musculus (Mouse)).